We begin with the raw amino-acid sequence, 153 residues long: UPF0743 protein YCR087C-A (153 aa).

2 consecutive C2HC LYAR-type zinc fingers follow at residues M1–P26 and N27–I52. Positions 6, 9, 21, 25, 32, 35, 48, and 51 each coordinate Zn(2+). A disordered region spans residues Y63–K96. Over residues G65–Q83 the composition is skewed to basic residues.

Belongs to the UPF0743 family.

It is found in the nucleus. The protein resides in the nucleolus. The chain is UPF0743 protein YCR087C-A from Saccharomyces cerevisiae (strain ATCC 204508 / S288c) (Baker's yeast).